We begin with the raw amino-acid sequence, 279 residues long: NADPH-dependent 7-cyano-7-deazaguanine reductase (279 aa).

86-88 (IES) lines the substrate pocket. NADPH is bound at residue 88–89 (SK). Cys187 functions as the Thioimide intermediate in the catalytic mechanism. Catalysis depends on Asp194, which acts as the Proton donor. 226-227 (HE) serves as a coordination point for substrate. 255-256 (RG) lines the NADPH pocket.

It belongs to the GTP cyclohydrolase I family. QueF type 2 subfamily. Homodimer.

It localises to the cytoplasm. The enzyme catalyses 7-aminomethyl-7-carbaguanine + 2 NADP(+) = 7-cyano-7-deazaguanine + 2 NADPH + 3 H(+). The protein operates within tRNA modification; tRNA-queuosine biosynthesis. Functionally, catalyzes the NADPH-dependent reduction of 7-cyano-7-deazaguanine (preQ0) to 7-aminomethyl-7-deazaguanine (preQ1). In Haemophilus ducreyi (strain 35000HP / ATCC 700724), this protein is NADPH-dependent 7-cyano-7-deazaguanine reductase.